The sequence spans 243 residues: MKIDILTLFPEMFAPLEHSIVGKAKEKGLLDIHYHNFRDYAEKARHVDDEPYGGGQGMLLRAQPIFDTIEQIEAKKPRIILLDPAGKPFTQAYAEELALEEELIFICGHYEGYDERIKTLVTDEISLGDFVLTGGELAAMTMVDATVRLIPQVLGKESSHQDDSFSSGLLEYPQYTRPYDYRGMTVPDVLMSGHHERIRLWRLEESLRKTCLRRPDLLEHYNFSEEERKLLDKIKEALDQGED.

S-adenosyl-L-methionine is bound by residues glycine 108 and 127-132 (LGDFVL).

Belongs to the RNA methyltransferase TrmD family. As to quaternary structure, homodimer.

The protein resides in the cytoplasm. It carries out the reaction guanosine(37) in tRNA + S-adenosyl-L-methionine = N(1)-methylguanosine(37) in tRNA + S-adenosyl-L-homocysteine + H(+). In terms of biological role, specifically methylates guanosine-37 in various tRNAs. This chain is tRNA (guanine-N(1)-)-methyltransferase, found in Streptococcus pyogenes serotype M2 (strain MGAS10270).